Reading from the N-terminus, the 450-residue chain is MKRRYFGTDGIRGQSNVFPMTPDLAMRVGIAAGTIFRRGNHRHRVVIGKDTRLSGYMLENAMVAGFTAAGLDAFILGPIPTPAVAMLTRSLRADLGVMISASHNPYEDNGIKLFGPDGYKLSDDIEAEIEDLLERDLNAQLAKSDDIGRAKRVDGVHDRYIEHAKRTLPRDVTLQGLRIAIDCANGAAYKVAPAVLWELGAEVVTIGNEPNGTNINLNCGSTSPVALQKKVDEVRADIGIALDGDADRVIIVDENGSIVDGDQLMAVIAESWAESQQLRGNGIVATVMSNLGLERFLDDKGLGLARTKVGDRYVVEHMRQHNYNVGGEQSGHIVLSDYGTTGDGLVAALQILAAVKRTGRTVSEVCRRFEPVPQLLRNVRISGGKPLEDIQVQKAIADAEAELARNGRLVIRPSGTEPLIRVMAEGDDRAQIERIVNELIGTISNVRTAA.

Ser102 functions as the Phosphoserine intermediate in the catalytic mechanism. Mg(2+)-binding residues include Ser102, Asp243, Asp245, and Asp247. Ser102 is subject to Phosphoserine.

It belongs to the phosphohexose mutase family. Mg(2+) serves as cofactor. In terms of processing, activated by phosphorylation.

The enzyme catalyses alpha-D-glucosamine 1-phosphate = D-glucosamine 6-phosphate. In terms of biological role, catalyzes the conversion of glucosamine-6-phosphate to glucosamine-1-phosphate. This chain is Phosphoglucosamine mutase, found in Rhizobium johnstonii (strain DSM 114642 / LMG 32736 / 3841) (Rhizobium leguminosarum bv. viciae).